Reading from the N-terminus, the 120-residue chain is Large ribosomal subunit protein uL18 (120 aa).

This sequence belongs to the universal ribosomal protein uL18 family. In terms of assembly, part of the 50S ribosomal subunit; part of the 5S rRNA/L5/L18/L25 subcomplex. Contacts the 5S and 23S rRNAs.

Functionally, this is one of the proteins that bind and probably mediate the attachment of the 5S RNA into the large ribosomal subunit, where it forms part of the central protuberance. This is Large ribosomal subunit protein uL18 from Brevibacillus brevis (strain 47 / JCM 6285 / NBRC 100599).